The sequence spans 115 residues: Large ribosomal subunit protein bL19 (115 aa).

It belongs to the bacterial ribosomal protein bL19 family.

Its function is as follows. This protein is located at the 30S-50S ribosomal subunit interface and may play a role in the structure and function of the aminoacyl-tRNA binding site. The polypeptide is Large ribosomal subunit protein bL19 (Parabacteroides distasonis (strain ATCC 8503 / DSM 20701 / CIP 104284 / JCM 5825 / NCTC 11152)).